A 357-amino-acid chain; its full sequence is Membrane-bound lytic murein transglycosylase C (357 aa).

The first 17 residues, 1 to 17 (MKLKKFLVLLLIPFLYA), serve as a signal peptide directing secretion. Cys-18 carries N-palmitoyl cysteine lipidation. Residue Cys-18 is the site of S-diacylglycerol cysteine attachment.

The protein belongs to the transglycosylase Slt family.

Its subcellular location is the cell outer membrane. The enzyme catalyses Exolytic cleavage of the (1-&gt;4)-beta-glycosidic linkage between N-acetylmuramic acid (MurNAc) and N-acetylglucosamine (GlcNAc) residues in peptidoglycan, from either the reducing or the non-reducing ends of the peptidoglycan chains, with concomitant formation of a 1,6-anhydrobond in the MurNAc residue.. Murein-degrading enzyme. May play a role in recycling of muropeptides during cell elongation and/or cell division. This chain is Membrane-bound lytic murein transglycosylase C, found in Mannheimia succiniciproducens (strain KCTC 0769BP / MBEL55E).